A 1342-amino-acid polypeptide reads, in one-letter code: DNA-directed RNA polymerase subunit beta (1342 aa).

Belongs to the RNA polymerase beta chain family. As to quaternary structure, the RNAP catalytic core consists of 2 alpha, 1 beta, 1 beta' and 1 omega subunit. When a sigma factor is associated with the core the holoenzyme is formed, which can initiate transcription.

It catalyses the reaction RNA(n) + a ribonucleoside 5'-triphosphate = RNA(n+1) + diphosphate. Its function is as follows. DNA-dependent RNA polymerase catalyzes the transcription of DNA into RNA using the four ribonucleoside triphosphates as substrates. This chain is DNA-directed RNA polymerase subunit beta, found in Histophilus somni (strain 2336) (Haemophilus somnus).